The following is a 269-amino-acid chain: Formamidopyrimidine-DNA glycosylase (269 aa).

Catalysis depends on Pro2, which acts as the Schiff-base intermediate with DNA. Glu3 serves as the catalytic Proton donor. Lys57 acts as the Proton donor; for beta-elimination activity in catalysis. Residues His90, Arg109, and Lys150 each contribute to the DNA site. An FPG-type zinc finger spans residues Leu235 to Gln269. Catalysis depends on Arg259, which acts as the Proton donor; for delta-elimination activity.

The protein belongs to the FPG family. As to quaternary structure, monomer. Zn(2+) serves as cofactor.

It carries out the reaction Hydrolysis of DNA containing ring-opened 7-methylguanine residues, releasing 2,6-diamino-4-hydroxy-5-(N-methyl)formamidopyrimidine.. It catalyses the reaction 2'-deoxyribonucleotide-(2'-deoxyribose 5'-phosphate)-2'-deoxyribonucleotide-DNA = a 3'-end 2'-deoxyribonucleotide-(2,3-dehydro-2,3-deoxyribose 5'-phosphate)-DNA + a 5'-end 5'-phospho-2'-deoxyribonucleoside-DNA + H(+). Involved in base excision repair of DNA damaged by oxidation or by mutagenic agents. Acts as a DNA glycosylase that recognizes and removes damaged bases. Has a preference for oxidized purines, such as 7,8-dihydro-8-oxoguanine (8-oxoG). Has AP (apurinic/apyrimidinic) lyase activity and introduces nicks in the DNA strand. Cleaves the DNA backbone by beta-delta elimination to generate a single-strand break at the site of the removed base with both 3'- and 5'-phosphates. The sequence is that of Formamidopyrimidine-DNA glycosylase from Vibrio parahaemolyticus serotype O3:K6 (strain RIMD 2210633).